The sequence spans 306 residues: MNLKQEKIAVLLGGTSAEREVSFNSGKAVLEALLKQGYNAHPIDPKEYNVANLKKDGFNRAFNILHGRGGEDGTMQGLLEQIGLPYTGCGVMASALTMDKMRTKMLWKAFGLPVADMKVVTRETFSELDPQAVVAKLGLPLMVKPSLEGSSVGLTKVKAVEELKSAVEYALKFDNTILIEEWLAGDELTVPVLDNQVLPAIRIVPEGEFYDYEAKYISDNTQYFCPAGLTPEREQELAILVKRAYDALGCRGWSRIDVMCDAKGNFRLVEVNTNPGMTSHSLFPKSAATVGISFEQLVVKILELSL.

The region spanning 104 to 303 is the ATP-grasp domain; the sequence is KMLWKAFGLP…FEQLVVKILE (200 aa). ATP is bound at residue 134 to 189; the sequence is VAKLGLPLMVKPSLEGSSVGLTKVKAVEELKSAVEYALKFDNTILIEEWLAGDELT. Residues aspartate 257, glutamate 270, and asparagine 272 each coordinate Mg(2+).

The protein belongs to the D-alanine--D-alanine ligase family. Requires Mg(2+) as cofactor. Mn(2+) serves as cofactor.

It is found in the cytoplasm. It catalyses the reaction 2 D-alanine + ATP = D-alanyl-D-alanine + ADP + phosphate + H(+). Its pathway is cell wall biogenesis; peptidoglycan biosynthesis. Functionally, cell wall formation. The sequence is that of D-alanine--D-alanine ligase from Haemophilus influenzae (strain 86-028NP).